Reading from the N-terminus, the 730-residue chain is Polyribonucleotide nucleotidyltransferase (730 aa).

Positions 489 and 495 each coordinate Mg(2+). The KH domain occupies proline 556–isoleucine 615. One can recognise an S1 motif domain in the interval glycine 625–lysine 693. The interval glycine 700 to glutamate 730 is disordered. Over residues leucine 703–alanine 714 the composition is skewed to basic and acidic residues. Positions arginine 715 to glutamate 730 are enriched in low complexity.

The protein belongs to the polyribonucleotide nucleotidyltransferase family. It depends on Mg(2+) as a cofactor.

The protein localises to the cytoplasm. It carries out the reaction RNA(n+1) + phosphate = RNA(n) + a ribonucleoside 5'-diphosphate. In terms of biological role, involved in mRNA degradation. Catalyzes the phosphorolysis of single-stranded polyribonucleotides processively in the 3'- to 5'-direction. In Xanthobacter autotrophicus (strain ATCC BAA-1158 / Py2), this protein is Polyribonucleotide nucleotidyltransferase.